A 31-amino-acid polypeptide reads, in one-letter code: Cyclotide vibi-H (31 aa).

A cross-link (cyclopeptide (Gly-Asn)) is located at residues 1-31 (GLLPCAESCVYIPCLTTVIGCSCKSKVCYKN). Intrachain disulfides connect C5–C21, C9–C23, and C14–C28.

This is a cyclic peptide.

Functionally, probably participates in a plant defense mechanism. Has cytotoxic activity, active against a human lymphoma cell line with an IC(50) of 1.6 uM. This Viola biflora (Yellow wood violet) protein is Cyclotide vibi-H.